Here is a 343-residue protein sequence, read N- to C-terminus: Methionine import ATP-binding protein MetN (343 aa).

Residues 2 to 241 (IKLSNITKVF…PKTPLAQKFI (240 aa)) form the ABC transporter domain. 40-46 (SGAGKST) lines the ATP pocket. The interval 265–343 (CVPMLRLEFT…HVKVEVLGYV (79 aa)) is C2 domain. L-methionine contacts are provided by residues 278–283 (VDAPLL) and 295–296 (NI).

It belongs to the ABC transporter superfamily. Methionine importer (TC 3.A.1.24) family. As to quaternary structure, the complex is composed of two ATP-binding proteins (MetN), two transmembrane proteins (MetI) and a solute-binding protein (MetQ).

The protein localises to the cell inner membrane. It carries out the reaction L-methionine(out) + ATP + H2O = L-methionine(in) + ADP + phosphate + H(+). The catalysed reaction is D-methionine(out) + ATP + H2O = D-methionine(in) + ADP + phosphate + H(+). ATPase activity is inhibited by intracellular L-methionine. Binding of methionine to the dimerized C-terminal regulatory domain stabilizes an inward-facing, ATPase-inactive conformation of the transporter, and as a consequence, the rate of ATP hydrolysis decreases. ADP is a competitive inhibitor. In terms of biological role, part of the ABC transporter complex MetNIQ involved in methionine import. Responsible for energy coupling to the transport system. It has also been shown to be involved in formyl-L-methionine transport. The chain is Methionine import ATP-binding protein MetN from Escherichia coli (strain K12).